The sequence spans 326 residues: Peroxidase 6 (326 aa).

Positions 1-20 (MKSFGLCLFILVSSPCLLQA) are cleaved as a signal peptide. Asn-21 carries an N-linked (GlcNAc...) asparagine glycan. 4 cysteine pairs are disulfide-bonded: Cys-31-Cys-112, Cys-64-Cys-69, Cys-118-Cys-318, and Cys-197-Cys-228. Residue His-62 is the Proton acceptor of the active site. Residues Asp-63, Val-66, Gly-68, Asp-70, and Ser-72 each coordinate Ca(2+). Asn-163 carries an N-linked (GlcNAc...) asparagine glycan. His-190 contacts heme b. Thr-191 is a Ca(2+) binding site. Asn-206 and Asn-230 each carry an N-linked (GlcNAc...) asparagine glycan. 3 residues coordinate Ca(2+): Asp-242, Thr-245, and Asp-250. N-linked (GlcNAc...) asparagine glycosylation occurs at Asn-274.

The protein belongs to the peroxidase family. Classical plant (class III) peroxidase subfamily. Heme b serves as cofactor. Requires Ca(2+) as cofactor.

Its subcellular location is the secreted. It carries out the reaction 2 a phenolic donor + H2O2 = 2 a phenolic radical donor + 2 H2O. Its function is as follows. Removal of H(2)O(2), oxidation of toxic reductants, biosynthesis and degradation of lignin, suberization, auxin catabolism, response to environmental stresses such as wounding, pathogen attack and oxidative stress. These functions might be dependent on each isozyme/isoform in each plant tissue. In Arabidopsis thaliana (Mouse-ear cress), this protein is Peroxidase 6 (PER6).